The sequence spans 364 residues: tRNA-specific 2-thiouridylase MnmA 1 (364 aa).

Residues 10-17 (GMSGGVDS) and methionine 36 contribute to the ATP site. Catalysis depends on cysteine 106, which acts as the Nucleophile. Residues cysteine 106 and cysteine 204 are joined by a disulfide bond. Glycine 130 provides a ligand contact to ATP. The tract at residues 154-156 (KDQ) is interaction with tRNA. Residue cysteine 204 is the Cysteine persulfide intermediate of the active site. Residues 310 to 311 (RY) are interaction with tRNA.

It belongs to the MnmA/TRMU family.

It is found in the cytoplasm. The enzyme catalyses S-sulfanyl-L-cysteinyl-[protein] + uridine(34) in tRNA + AH2 + ATP = 2-thiouridine(34) in tRNA + L-cysteinyl-[protein] + A + AMP + diphosphate + H(+). Its function is as follows. Catalyzes the 2-thiolation of uridine at the wobble position (U34) of tRNA, leading to the formation of s(2)U34. In Thermoanaerobacter pseudethanolicus (strain ATCC 33223 / 39E) (Clostridium thermohydrosulfuricum), this protein is tRNA-specific 2-thiouridylase MnmA 1.